The following is a 3075-amino-acid chain: Laminin subunit alpha-1 (3075 aa).

The N-terminal stretch at 1-17 is a signal peptide; it reads MRGGVLLVLLLCVAAQC. A Laminin N-terminal domain is found at 18–269; sequence RQRGLFPAIL…SIKDISVGGM (252 aa). 16 disulfide bridges follow: C270/C279, C272/C290, C292/C301, C304/C324, C327/C336, C329/C361, C364/C373, C376/C394, C397/C409, C399/C427, C429/C438, C441/C451, C454/C467, C456/C471, C473/C482, and C485/C500. 4 Laminin EGF-like domains span residues 270-326, 327-396, 397-453, and 454-502; these read CICY…TCEA, CNCH…PCRP, CNCD…TCVS, and CGCN…GCSE. The 10-residue stretch at 503–512 folds into the Laminin EGF-like 5; first part domain; sequence CFCFGVSDVC. One can recognise a Laminin IV type A 1 domain in the interval 516–708; the sequence is SWPVGQVNSM…DLVVAADVEH (193 aa). N665 is a glycosylation site (N-linked (GlcNAc...) asparagine). The Laminin EGF-like 5; second part domain occupies 709–741; the sequence is CECPQGYTGTSCESCLSGYYRVDGILFGGICQP. Disulfide bonds link C742-C751, C744-C757, C760-C769, C772-C788, C791-C806, C793-C816, C819-C828, C831-C846, C849-C863, C851-C870, C873-C882, C885-C899, C902-C914, C904-C921, C923-C932, C935-C948, C951-C963, C953-C969, C971-C980, C983-C995, C998-C1007, C1000-C1014, C1016-C1025, C1028-C1041, C1044-C1056, C1046-C1063, C1065-C1074, C1077-C1087, C1090-C1102, C1092-C1118, C1120-C1129, and C1132-C1147. Laminin EGF-like domains are found at residues 742–790, 791–848, 849–901, 902–950, 951–997, 998–1043, 1044–1089, and 1090–1149; these read CECH…DCQP, CACP…SCVP, CDCS…NCRA, CECH…GCRP, CNCS…SCTP, CDCP…GCQA, CNCS…DCVP, and CDCD…GCSP. The Laminin EGF-like 14; first part domain maps to 1150–1159; the sequence is CFCSGLSHLC. A Laminin IV type A 2 domain is found at 1170-1361; that stretch reads VTLGSDQPLL…EEEVASLLEN (192 aa). Residues 1362–1402 form the Laminin EGF-like 14; second part domain; it reads CVCPPGTVGFSCQDCAPGYHRGKLPAGSDRGPRPLVAPCVP. Cystine bridges form between C1403–C1412, C1405–C1419, C1422–C1431, C1434–C1449, C1452–C1466, C1454–C1476, C1479–C1488, C1491–C1506, C1509–C1521, C1511–C1528, C1530–C1539, and C1542–C1553. Laminin EGF-like domains lie at 1403–1451, 1452–1508, and 1509–1555; these read CSCN…DCAL, CACP…SCQK, and CDCN…DCVS. The interval 1556–2116 is domain II and I; sequence CDDECVGVLL…SQARKQAASI (561 aa). N-linked (GlcNAc...) asparagine glycosylation is found at N1579, N1689, N1717, N2047, and N2243. Residues 1706–1783 adopt a coiled-coil conformation; that stretch reads MQIRDFTQLH…KMQESNHLLL (78 aa). Laminin G-like domains are found at residues 2117–2297, 2305–2481, 2486–2673, 2713–2885, and 2890–3070; these read KVAV…CRGC, DPSF…RKGC, IRSV…LDTC, AHQF…VNRC, and QEGT…LHSC. Disulfide bonds link C2271-C2297 and C2457-C2481. Positions 2534 to 2536 match the Cell attachment site motif; that stretch reads RGD. 3 cysteine pairs are disulfide-bonded: C2646/C2673, C2860/C2885, and C3039/C3070.

In terms of assembly, laminin is a complex glycoprotein, consisting of three different polypeptide chains (alpha, beta, gamma), which are bound to each other by disulfide bonds into a cross-shaped molecule comprising one long and three short arms with globules at each end. Alpha-1 is a subunit of laminin-1 (laminin-111 or EHS laminin) and laminin-3 (laminin-121 or S-laminin). In terms of processing, tyrosine phosphorylated by PKDCC/VLK.

It localises to the secreted. It is found in the extracellular space. The protein resides in the extracellular matrix. Its subcellular location is the basement membrane. Functionally, binding to cells via a high affinity receptor, laminin is thought to mediate the attachment, migration and organization of cells into tissues during embryonic development by interacting with other extracellular matrix components. In Homo sapiens (Human), this protein is Laminin subunit alpha-1 (LAMA1).